The sequence spans 634 residues: MAGDEIKAALFLCALQNAVRHGGVPQAGAVIGMVMGAHPELRKQAKEVSAAAKDAIADVAALSPEERVTKLQSLSPEMFAALHEKHEKKKVLPDLEGAEHGVVMRFAPNPSGPLHIGHARAAALNDAYVKQYGGRYILRIEDTDPKRVDPEAYDMVKEDIAWMGLGITETVTQSERFPIYYDLCKQLIERGGAYVCTCENEHFKALKDAKKACPCRDQPVETALLLWEKMLNGGFKEGEASVRVKTDLLNPDPAMRDYPIFRILDAPLHPKIGDARVYPLMNFSVVADDHLLGVTHVIRGKDHIANTRRQRYIYDHFGWKVPVYRHYGRMGIEGVVLSTSQMHAGIDEGKYTGWDDIHLGTLRALARRGISPDAVKNAMIAIGIGDVDISFSWDNLYAENKKIVDPVANRYFFVPDPLEAKIAGASAHTAHAMLHPGHEEKGTRTLEFTGTVLIPRAEIFSVIVSSLNDISQGGDYESPQAKISSENVSPITSINEKKESVHSDNLPKLEGSLSSSLNDRKLVPRKYEPKREITMLRLKDLFNVNITWDGETPSFSYGGDSLADARAAKARIIQWLPAQSFVPCTLLTQDGEMKGACEPAVTTEVGKVVQFERIAFARIDAVTESGVRAYFTHT.

Positions 108 to 118 match the 'HIGH' region motif; it reads PNPSGPLHIGH.

The protein belongs to the class-I aminoacyl-tRNA synthetase family. Glutamate--tRNA ligase type 2 subfamily.

It localises to the cytoplasm. The catalysed reaction is tRNA(Glu) + L-glutamate + ATP = L-glutamyl-tRNA(Glu) + AMP + diphosphate. Catalyzes the attachment of glutamate to tRNA(Glu) in a two-step reaction: glutamate is first activated by ATP to form Glu-AMP and then transferred to the acceptor end of tRNA(Glu). In Methanoregula boonei (strain DSM 21154 / JCM 14090 / 6A8), this protein is Glutamate--tRNA ligase.